We begin with the raw amino-acid sequence, 265 residues long: Tryptophan synthase alpha chain (265 aa).

Catalysis depends on proton acceptor residues Glu49 and Asp60.

It belongs to the TrpA family. Tetramer of two alpha and two beta chains.

It carries out the reaction (1S,2R)-1-C-(indol-3-yl)glycerol 3-phosphate + L-serine = D-glyceraldehyde 3-phosphate + L-tryptophan + H2O. Its pathway is amino-acid biosynthesis; L-tryptophan biosynthesis; L-tryptophan from chorismate: step 5/5. The alpha subunit is responsible for the aldol cleavage of indoleglycerol phosphate to indole and glyceraldehyde 3-phosphate. This Desulfosudis oleivorans (strain DSM 6200 / JCM 39069 / Hxd3) (Desulfococcus oleovorans) protein is Tryptophan synthase alpha chain.